Here is a 672-residue protein sequence, read N- to C-terminus: tRNA 5-methylaminomethyl-2-thiouridine biosynthesis bifunctional protein MnmC (672 aa).

A tRNA (mnm(5)s(2)U34)-methyltransferase region spans residues methionine 1–proline 241. The tract at residues isoleucine 271 to lysine 672 is FAD-dependent cmnm(5)s(2)U34 oxidoreductase.

The protein in the N-terminal section; belongs to the methyltransferase superfamily. tRNA (mnm(5)s(2)U34)-methyltransferase family. In the C-terminal section; belongs to the DAO family. Requires FAD as cofactor.

It is found in the cytoplasm. It carries out the reaction 5-aminomethyl-2-thiouridine(34) in tRNA + S-adenosyl-L-methionine = 5-methylaminomethyl-2-thiouridine(34) in tRNA + S-adenosyl-L-homocysteine + H(+). Its function is as follows. Catalyzes the last two steps in the biosynthesis of 5-methylaminomethyl-2-thiouridine (mnm(5)s(2)U) at the wobble position (U34) in tRNA. Catalyzes the FAD-dependent demodification of cmnm(5)s(2)U34 to nm(5)s(2)U34, followed by the transfer of a methyl group from S-adenosyl-L-methionine to nm(5)s(2)U34, to form mnm(5)s(2)U34. The chain is tRNA 5-methylaminomethyl-2-thiouridine biosynthesis bifunctional protein MnmC from Mannheimia succiniciproducens (strain KCTC 0769BP / MBEL55E).